We begin with the raw amino-acid sequence, 220 residues long: Ribosomal RNA large subunit methyltransferase E (220 aa).

5 residues coordinate S-adenosyl-L-methionine: Gly60, Trp62, Asp92, Asp108, and Asp133. Lys173 (proton acceptor) is an active-site residue.

Belongs to the class I-like SAM-binding methyltransferase superfamily. RNA methyltransferase RlmE family.

The protein localises to the cytoplasm. It carries out the reaction uridine(2552) in 23S rRNA + S-adenosyl-L-methionine = 2'-O-methyluridine(2552) in 23S rRNA + S-adenosyl-L-homocysteine + H(+). In terms of biological role, specifically methylates the uridine in position 2552 of 23S rRNA at the 2'-O position of the ribose in the fully assembled 50S ribosomal subunit. The protein is Ribosomal RNA large subunit methyltransferase E of Paraburkholderia xenovorans (strain LB400).